A 73-amino-acid polypeptide reads, in one-letter code: Putative antimicrobial peptide clone 5 (73 aa).

Residues 1 to 22 (MQIKHLITLFFLVLIGADQCSA) form the signal peptide. Positions 45–73 (EVSPQIDQYRNFQKREAELEELLDRLPMY) are excised as a propeptide.

The protein belongs to the non-disulfide-bridged peptide (NDBP) superfamily. Short antimicrobial peptide (group 4) family. In terms of tissue distribution, expressed by the venom gland.

It is found in the secreted. Functionally, antibacterial peptide. The protein is Putative antimicrobial peptide clone 5 of Tityus costatus (Brazilian scorpion).